The sequence spans 179 residues: Large ribosomal subunit protein uL5 (179 aa).

Belongs to the universal ribosomal protein uL5 family. Part of the 50S ribosomal subunit; part of the 5S rRNA/L5/L18/L25 subcomplex. Contacts the 5S rRNA and the P site tRNA. Forms a bridge to the 30S subunit in the 70S ribosome.

Functionally, this is one of the proteins that bind and probably mediate the attachment of the 5S RNA into the large ribosomal subunit, where it forms part of the central protuberance. In the 70S ribosome it contacts protein S13 of the 30S subunit (bridge B1b), connecting the 2 subunits; this bridge is implicated in subunit movement. Contacts the P site tRNA; the 5S rRNA and some of its associated proteins might help stabilize positioning of ribosome-bound tRNAs. The chain is Large ribosomal subunit protein uL5 from Haemophilus ducreyi (strain 35000HP / ATCC 700724).